Reading from the N-terminus, the 89-residue chain is MSSQQQKQPCTPPPQLQQQQVKQPCQPPPQEPCIPKTKEPCHPKVPEPCHPKVPEPCQPKVPEPCHPKVPEPCPSIVTPAPAQQKTKQK.

Residues 1–29 (MSSQQQKQPCTPPPQLQQQQVKQPCQPPP) form a disordered region. 8 consecutive repeat copies span residues 3 to 14 (SQQQKQPCTPPP), 18 to 29 (QQQVKQPCQPPP), 31 to 38 (EPCIPKTK), 39 to 46 (EPCHPKVP), 47 to 54 (EPCHPKVP), 55 to 62 (EPCQPKVP), 63 to 70 (EPCHPKVP), and 71 to 78 (EPCPSIVT). The 2 X 12 AA approximate repeats stretch occupies residues 3–29 (SQQQKQPCTPPPQLQQQQVKQPCQPPP). A 6 X 8 AA approximate tandem repeats region spans residues 31 to 78 (EPCIPKTKEPCHPKVPEPCHPKVPEPCQPKVPEPCHPKVPEPCPSIVT).

It belongs to the cornifin (SPRR) family. The N-terminus is blocked. Suprabasal layers of squamous-differentiated tissues such as epidermis, esophagus, tongue and trachea.

It is found in the cytoplasm. Functionally, cross-linked envelope protein of keratinocytes. It is a keratinocyte protein that first appears in the cell cytosol, but ultimately becomes cross-linked to membrane proteins by transglutaminase. All that results in the formation of an insoluble envelope beneath the plasma membrane. Can function as both amine donor and acceptor in transglutaminase-mediated cross-linkage. The polypeptide is Cornifin-B (SPRR1B) (Homo sapiens (Human)).